Here is a 515-residue protein sequence, read N- to C-terminus: Maturase K (515 aa).

This sequence belongs to the intron maturase 2 family. MatK subfamily.

It localises to the plastid. It is found in the chloroplast. Its function is as follows. Usually encoded in the trnK tRNA gene intron. Probably assists in splicing its own and other chloroplast group II introns. In Pinus contorta (Shore pine), this protein is Maturase K.